Reading from the N-terminus, the 85-residue chain is CRISPR-associated endoribonuclease Cas2 2 (85 aa).

Position 8 (Asp-8) interacts with Mg(2+).

This sequence belongs to the CRISPR-associated endoribonuclease Cas2 protein family. In terms of assembly, homodimer, forms a heterotetramer with a Cas1 homodimer. The cofactor is Mg(2+).

CRISPR (clustered regularly interspaced short palindromic repeat), is an adaptive immune system that provides protection against mobile genetic elements (viruses, transposable elements and conjugative plasmids). CRISPR clusters contain sequences complementary to antecedent mobile elements and target invading nucleic acids. CRISPR clusters are transcribed and processed into CRISPR RNA (crRNA). Functions as a ssRNA-specific endoribonuclease. Involved in the integration of spacer DNA into the CRISPR cassette. In Chloroflexus aurantiacus (strain ATCC 29366 / DSM 635 / J-10-fl), this protein is CRISPR-associated endoribonuclease Cas2 2.